The sequence spans 81 residues: Sec-independent protein translocase protein TatA (81 aa).

The chain crosses the membrane as a helical span at residues 1 to 21 (MGGLQPWHWVIVIAVFVLLFG). The segment covering 46–56 (MQAESKGDEPK) has biased composition (basic and acidic residues). The segment at 46–81 (MQAESKGDEPKPATPIASERVDTTAPEQQSTDRHTA) is disordered.

Belongs to the TatA/E family. The Tat system comprises two distinct complexes: a TatABC complex, containing multiple copies of TatA, TatB and TatC subunits, and a separate TatA complex, containing only TatA subunits. Substrates initially bind to the TatABC complex, which probably triggers association of the separate TatA complex to form the active translocon.

The protein localises to the cell membrane. Its function is as follows. Part of the twin-arginine translocation (Tat) system that transports large folded proteins containing a characteristic twin-arginine motif in their signal peptide across membranes. TatA could form the protein-conducting channel of the Tat system. This chain is Sec-independent protein translocase protein TatA, found in Mycolicibacterium smegmatis (strain ATCC 700084 / mc(2)155) (Mycobacterium smegmatis).